A 651-amino-acid polypeptide reads, in one-letter code: Peptide-N(4)-(N-acetyl-beta-glucosaminyl)asparagine amidase (651 aa).

The region spanning 29 to 90 (EASRLLLTYA…EGETHMVFPK (62 aa)) is the PUB domain. Residues Cys246, Cys249, Cys279, and Cys282 each coordinate Zn(2+). The active-site Nucleophile is the Cys305. Residues His332 and Asp349 contribute to the active site. Positions 450–651 (EFGGRTSGSM…LEMIIKLADL (202 aa)) constitute a PAW domain.

It belongs to the transglutaminase-like superfamily. PNGase family. Zn(2+) serves as cofactor.

It is found in the cytoplasm. The catalysed reaction is Hydrolysis of an N(4)-(acetyl-beta-D-glucosaminyl)asparagine residue in which the glucosamine residue may be further glycosylated, to yield a (substituted) N-acetyl-beta-D-glucosaminylamine and a peptide containing an aspartate residue.. Its function is as follows. Specifically deglycosylates the denatured form of N-linked glycoproteins in the cytoplasm and assists their proteasome-mediated degradation. Cleaves the beta-aspartyl-glucosamine (GlcNAc) of the glycan and the amide side chain of Asn, converting Asn to Asp. Prefers proteins containing high-mannose over those bearing complex type oligosaccharides. Can recognize misfolded proteins in the endoplasmic reticulum that are exported to the cytosol to be destroyed and deglycosylate them, while it has no activity toward native proteins. Deglycosylation is a prerequisite for subsequent proteasome-mediated degradation of some, but not all, misfolded glycoproteins. The sequence is that of Peptide-N(4)-(N-acetyl-beta-glucosaminyl)asparagine amidase (NGLY1) from Gallus gallus (Chicken).